A 950-amino-acid chain; its full sequence is Leucine--tRNA ligase (950 aa).

Residues 72 to 83 (PYPSGEGLHVGH) carry the 'HIGH' region motif. Residues 722–726 (KIGKS) carry the 'KMSKS' region motif. Lysine 725 contributes to the ATP binding site.

Belongs to the class-I aminoacyl-tRNA synthetase family.

It localises to the cytoplasm. The enzyme catalyses tRNA(Leu) + L-leucine + ATP = L-leucyl-tRNA(Leu) + AMP + diphosphate. The polypeptide is Leucine--tRNA ligase (Mycobacterium sp. (strain JLS)).